Consider the following 162-residue polypeptide: Large ribosomal subunit protein uL15 (162 aa).

A compositionally biased stretch (basic and acidic residues) spans 1–10 (MNLNELRDNA). Residues 1–39 (MNLNELRDNAGSRYRKKRLGRGIGSGKGKTSGKGVKGQK) are disordered. Over residues 21–35 (RGIGSGKGKTSGKGV) the composition is skewed to gly residues.

This sequence belongs to the universal ribosomal protein uL15 family. As to quaternary structure, part of the 50S ribosomal subunit.

In terms of biological role, binds to the 23S rRNA. The protein is Large ribosomal subunit protein uL15 of Gluconacetobacter diazotrophicus (strain ATCC 49037 / DSM 5601 / CCUG 37298 / CIP 103539 / LMG 7603 / PAl5).